Here is a 323-residue protein sequence, read N- to C-terminus: tRNA dimethylallyltransferase (323 aa).

12–19 (GPTAAGKT) is a binding site for ATP. Substrate is bound at residue 14-19 (TAAGKT). 2 interaction with substrate tRNA regions span residues 37–40 (DSAL) and 161–165 (QRLMR).

Belongs to the IPP transferase family. In terms of assembly, monomer. It depends on Mg(2+) as a cofactor.

The catalysed reaction is adenosine(37) in tRNA + dimethylallyl diphosphate = N(6)-dimethylallyladenosine(37) in tRNA + diphosphate. In terms of biological role, catalyzes the transfer of a dimethylallyl group onto the adenine at position 37 in tRNAs that read codons beginning with uridine, leading to the formation of N6-(dimethylallyl)adenosine (i(6)A). The polypeptide is tRNA dimethylallyltransferase (Pseudomonas aeruginosa (strain UCBPP-PA14)).